We begin with the raw amino-acid sequence, 107 residues long: U1-lycotoxin-Ls1d (107 aa).

The N-terminal stretch at 1–20 (MMKVLVVVALLVTLISYSSS) is a signal peptide. Positions 21–41 (EGIDDLEADELLSLMANEQTR) are excised as a propeptide. Cystine bridges form between cysteine 44–cysteine 59, cysteine 51–cysteine 68, cysteine 58–cysteine 86, and cysteine 70–cysteine 84.

The protein belongs to the neurotoxin 19 (CSTX) family. 04 (U1-Lctx) subfamily. Expressed by the venom gland.

It is found in the secreted. The protein is U1-lycotoxin-Ls1d of Lycosa singoriensis (Wolf spider).